We begin with the raw amino-acid sequence, 317 residues long: Acetyl-coenzyme A carboxylase carboxyl transferase subunit alpha (317 aa).

The CoA carboxyltransferase C-terminal domain occupies 40 to 293 (LEVRVREAIV…GDVIASALAE (254 aa)).

The protein belongs to the AccA family. As to quaternary structure, acetyl-CoA carboxylase is a heterohexamer composed of biotin carboxyl carrier protein (AccB), biotin carboxylase (AccC) and two subunits each of ACCase subunit alpha (AccA) and ACCase subunit beta (AccD).

The protein resides in the cytoplasm. It catalyses the reaction N(6)-carboxybiotinyl-L-lysyl-[protein] + acetyl-CoA = N(6)-biotinyl-L-lysyl-[protein] + malonyl-CoA. It participates in lipid metabolism; malonyl-CoA biosynthesis; malonyl-CoA from acetyl-CoA: step 1/1. Component of the acetyl coenzyme A carboxylase (ACC) complex. First, biotin carboxylase catalyzes the carboxylation of biotin on its carrier protein (BCCP) and then the CO(2) group is transferred by the carboxyltransferase to acetyl-CoA to form malonyl-CoA. The chain is Acetyl-coenzyme A carboxylase carboxyl transferase subunit alpha from Rhizobium johnstonii (strain DSM 114642 / LMG 32736 / 3841) (Rhizobium leguminosarum bv. viciae).